The chain runs to 274 residues: Probable starch degradation products transport system permease protein AmyC (274 aa).

6 helical membrane-spanning segments follow: residues 11-31 (LTFL…IILV), 73-93 (LIIT…TAYA), 103-123 (VIIY…VMIP), 139-159 (LVFM…YGAL), 184-204 (IILP…IMWI), and 238-258 (WNLG…FYFL). Positions 69–259 (FSNTLIITVF…LPVVIFYFLA (191 aa)) constitute an ABC transmembrane type-1 domain.

Belongs to the binding-protein-dependent transport system permease family. MalFG subfamily.

The protein localises to the cell membrane. Its function is as follows. Probably part of a binding-protein-dependent transport system starch degradation products. Probably responsible for the translocation of the substrate across the membrane. This chain is Probable starch degradation products transport system permease protein AmyC (amyC), found in Thermoanaerobacterium thermosulfurigenes (Clostridium thermosulfurogenes).